The sequence spans 60 residues: Large ribosomal subunit protein uL30 (60 aa).

It belongs to the universal ribosomal protein uL30 family. Part of the 50S ribosomal subunit.

This is Large ribosomal subunit protein uL30 from Streptomyces griseus subsp. griseus (strain JCM 4626 / CBS 651.72 / NBRC 13350 / KCC S-0626 / ISP 5235).